Consider the following 459-residue polypeptide: Glutamyl-tRNA reductase (459 aa).

Residues T47–R50, S140, E145–Q147, and Q151 each bind substrate. Residue C48 is the Nucleophile of the active site. A220–N225 contributes to the NADP(+) binding site.

It belongs to the glutamyl-tRNA reductase family. Homodimer.

It carries out the reaction (S)-4-amino-5-oxopentanoate + tRNA(Glu) + NADP(+) = L-glutamyl-tRNA(Glu) + NADPH + H(+). The protein operates within porphyrin-containing compound metabolism; protoporphyrin-IX biosynthesis; 5-aminolevulinate from L-glutamyl-tRNA(Glu): step 1/2. Functionally, catalyzes the NADPH-dependent reduction of glutamyl-tRNA(Glu) to glutamate 1-semialdehyde (GSA). This is Glutamyl-tRNA reductase from Psychrobacter arcticus (strain DSM 17307 / VKM B-2377 / 273-4).